The following is a 283-amino-acid chain: Thymidylate synthase (283 aa).

Arg-22 is a dUMP binding site. Residue Cys-160 is the Nucleophile of the active site. DUMP contacts are provided by residues 180–183, Asn-191, and 221–223; these read RSCD and HIY. Residue Asp-183 coordinates (6R)-5,10-methylene-5,6,7,8-tetrahydrofolate. Ser-282 is a binding site for (6R)-5,10-methylene-5,6,7,8-tetrahydrofolate.

Belongs to the thymidylate synthase family. Bacterial-type ThyA subfamily. As to quaternary structure, homodimer.

Its subcellular location is the cytoplasm. It carries out the reaction dUMP + (6R)-5,10-methylene-5,6,7,8-tetrahydrofolate = 7,8-dihydrofolate + dTMP. It functions in the pathway pyrimidine metabolism; dTTP biosynthesis. Catalyzes the reductive methylation of 2'-deoxyuridine-5'-monophosphate (dUMP) to 2'-deoxythymidine-5'-monophosphate (dTMP) while utilizing 5,10-methylenetetrahydrofolate (mTHF) as the methyl donor and reductant in the reaction, yielding dihydrofolate (DHF) as a by-product. This enzymatic reaction provides an intracellular de novo source of dTMP, an essential precursor for DNA biosynthesis. The protein is Thymidylate synthase of Haemophilus influenzae (strain PittGG).